The sequence spans 424 residues: Delta(14)-sterol reductase erg24 (424 aa).

Helical transmembrane passes span 19 to 39 (IGAL…FYIC) and 112 to 132 (LILG…MEFI). NADP(+) contacts are provided by residues K317, R321, L344, W349, and 356 to 357 (NY). The helical transmembrane segment at 370–390 (PAGFGSPIPYFYVAYFGVLLV) threads the bilayer. NADP(+) contacts are provided by residues D396, 400–404 (CRVKY), and Y411.

Belongs to the ERG4/ERG24 family.

It localises to the endoplasmic reticulum membrane. It catalyses the reaction 4,4-dimethyl-5alpha-cholesta-8,24-dien-3beta-ol + NADP(+) = 4,4-dimethyl-5alpha-cholesta-8,14,24-trien-3beta-ol + NADPH + H(+). It functions in the pathway steroid biosynthesis; zymosterol biosynthesis; zymosterol from lanosterol: step 2/6. Its pathway is steroid metabolism; ergosterol biosynthesis. Delta(14)-sterol reductase; part of the third module of ergosterol biosynthesis pathway that includes by the late steps of the pathway. Erg24 reduces the C14=C15 double bond of 4,4-dimethyl-cholesta-8,14,24-trienol to produce 4,4-dimethyl-cholesta-8,24-dienol. The third module or late pathway involves the ergosterol synthesis itself through consecutive reactions that mainly occur in the endoplasmic reticulum (ER) membrane. Firstly, the squalene synthase erg9 catalyzes the condensation of 2 farnesyl pyrophosphate moieties to form squalene, which is the precursor of all steroids. Secondly, squalene is converted into lanosterol by the consecutive action of the squalene epoxidase erg1 and the lanosterol synthase erg7. The lanosterol 14-alpha-demethylase erg11/cyp1 catalyzes C14-demethylation of lanosterol to produce 4,4'-dimethyl cholesta-8,14,24-triene-3-beta-ol. In the next steps, a complex process involving various demethylation, reduction and desaturation reactions catalyzed by the C-14 reductase erg24 and the C-4 demethylation complex erg25-erg26-erg27 leads to the production of zymosterol. Erg28 likely functions in the C-4 demethylation complex reaction by tethering erg26 and Erg27 to the endoplasmic reticulum or to facilitate interaction between these proteins. Then, the sterol 24-C-methyltransferase erg6 catalyzes the methyl transfer from S-adenosyl-methionine to the C-24 of zymosterol to form fecosterol. The C-8 sterol isomerase erg2 catalyzes the reaction which results in unsaturation at C-7 in the B ring of sterols and thus converts fecosterol to episterol. The sterol-C5-desaturases erg31 and erg32 then catalyze the introduction of a C-5 double bond in the B ring to produce 5-dehydroepisterol. The C-22 sterol desaturase erg5 further converts 5-dehydroepisterol into ergosta-5,7,22,24(28)-tetraen-3beta-ol by forming the C-22(23) double bond in the sterol side chain. Finally, ergosta-5,7,22,24(28)-tetraen-3beta-ol is substrate of the C-24(28) sterol reductase erg4 to produce ergosterol. In the genus Schizosaccharomyces, a second route exists between lanosterol and fecosterol, via the methylation of lanosterol to eburicol by erg6, followed by C14-demethylation by erg11/cyp1 and C4-demethylation by the demethylation complex erg25-erg26-erg27. This Schizosaccharomyces pombe (strain 972 / ATCC 24843) (Fission yeast) protein is Delta(14)-sterol reductase erg24.